The following is a 436-amino-acid chain: MNFQENLAALDLEYLWHPCSQMQEHQNFPIIPIKKAQGIYLYDFNDNAYMDLISSWWVNLFGHNNAYISQQLKNQIDDLEHVLLASFSHKPIITLSQRLCQLTHMDKCFYADNGSSCVEIALKMSYHAHFLKNQTRRKKLFLSLSNSYHGETLGALSVGDVKLYKDTYTPLLLKNLTTPVPKNDHEIENSLNALKRLLDKHSEEICAFIAEPLLQCAGNMHIYSARYLKQAVLLCKQKNIHIIFDEIATGFGRTGSMFAYEQCEIKPDFLCLSKGISGGYLPLSALLTHNEIYNQFYAPYEENKAFLHSHSYTGNALACACANATLDIFEKENVIEKNKALSGFIFNTLQNALKPLMEQQVVSDLRHLGMVFAFEVFIQTKERLSLAVFKKTLKKGLLLRPLNNTIYLMPPYIITHEEVKKAVAGLVEILDELRKG.

Trp-56 contributes to the substrate binding site. Residue 114–115 coordinates pyridoxal 5'-phosphate; sequence GS. Residue Tyr-148 coordinates substrate. Asp-245 is a pyridoxal 5'-phosphate binding site. Lys-274, Ser-309, and Arg-400 together coordinate substrate. Residue Lys-274 is modified to N6-(pyridoxal phosphate)lysine.

It belongs to the class-III pyridoxal-phosphate-dependent aminotransferase family. BioA subfamily. In terms of assembly, homodimer. Requires pyridoxal 5'-phosphate as cofactor.

The protein localises to the cytoplasm. It carries out the reaction (8S)-8-amino-7-oxononanoate + S-adenosyl-L-methionine = S-adenosyl-4-methylsulfanyl-2-oxobutanoate + (7R,8S)-7,8-diammoniononanoate. Its pathway is cofactor biosynthesis; biotin biosynthesis; 7,8-diaminononanoate from 8-amino-7-oxononanoate (SAM route): step 1/1. Functionally, catalyzes the transfer of the alpha-amino group from S-adenosyl-L-methionine (SAM) to 7-keto-8-aminopelargonic acid (KAPA) to form 7,8-diaminopelargonic acid (DAPA). It is the only aminotransferase known to utilize SAM as an amino donor. In Helicobacter pylori (strain ATCC 700392 / 26695) (Campylobacter pylori), this protein is Adenosylmethionine-8-amino-7-oxononanoate aminotransferase.